We begin with the raw amino-acid sequence, 218 residues long: GEM-like protein 6 (218 aa).

Residues 96–174 enclose the GRAM domain; the sequence is KIYKRLFKVC…CKINGVNQSQ (79 aa).

Belongs to the GEM family.

In Arabidopsis thaliana (Mouse-ear cress), this protein is GEM-like protein 6.